Here is a 289-residue protein sequence, read N- to C-terminus: 4-diphosphocytidyl-2-C-methyl-D-erythritol kinase (289 aa).

Lys-16 is an active-site residue. Position 99-109 (99-109 (PMGGGIGGGSS)) interacts with ATP. Asp-141 is a catalytic residue.

The protein belongs to the GHMP kinase family. IspE subfamily.

It carries out the reaction 4-CDP-2-C-methyl-D-erythritol + ATP = 4-CDP-2-C-methyl-D-erythritol 2-phosphate + ADP + H(+). It functions in the pathway isoprenoid biosynthesis; isopentenyl diphosphate biosynthesis via DXP pathway; isopentenyl diphosphate from 1-deoxy-D-xylulose 5-phosphate: step 3/6. Its function is as follows. Catalyzes the phosphorylation of the position 2 hydroxy group of 4-diphosphocytidyl-2C-methyl-D-erythritol. The chain is 4-diphosphocytidyl-2-C-methyl-D-erythritol kinase from Ralstonia nicotianae (strain ATCC BAA-1114 / GMI1000) (Ralstonia solanacearum).